Reading from the N-terminus, the 425-residue chain is Enolase (425 aa).

Position 162 (glutamine 162) interacts with (2R)-2-phosphoglycerate. Catalysis depends on glutamate 204, which acts as the Proton donor. The Mg(2+) site is built by aspartate 241, glutamate 282, and aspartate 309. Positions 334, 363, 364, and 385 each coordinate (2R)-2-phosphoglycerate. Lysine 334 serves as the catalytic Proton acceptor.

The protein belongs to the enolase family. It depends on Mg(2+) as a cofactor.

The protein localises to the cytoplasm. It is found in the secreted. The protein resides in the cell surface. It catalyses the reaction (2R)-2-phosphoglycerate = phosphoenolpyruvate + H2O. It functions in the pathway carbohydrate degradation; glycolysis; pyruvate from D-glyceraldehyde 3-phosphate: step 4/5. Functionally, catalyzes the reversible conversion of 2-phosphoglycerate (2-PG) into phosphoenolpyruvate (PEP). It is essential for the degradation of carbohydrates via glycolysis. The chain is Enolase from Corynebacterium aurimucosum (strain ATCC 700975 / DSM 44827 / CIP 107346 / CN-1) (Corynebacterium nigricans).